The following is a 200-amino-acid chain: MNEIYLIGLGNPGKKYSNSRHNIGFLLLENLSKKYNSSFLLKDKLKSFYSEFKANDSTYRLFLPNTFMNNSGEAVLAILDWYKINLNQIFVIVDDKDLPLGKIRFRKKGSSGGHNGLKSIIEKLQTHDFNRIRIGIGSPPSTKETNNFNTISHVLGNISREEKSILDKVYVRVIESLEQLNTKKEEYIINKLNSFDIEQI.

TRNA is bound at residue Tyr-16. The active-site Proton acceptor is the His-21. Residues Phe-67, Asn-69, and Asn-115 each coordinate tRNA.

The protein belongs to the PTH family. Monomer.

Its subcellular location is the cytoplasm. The catalysed reaction is an N-acyl-L-alpha-aminoacyl-tRNA + H2O = an N-acyl-L-amino acid + a tRNA + H(+). In terms of biological role, hydrolyzes ribosome-free peptidyl-tRNAs (with 1 or more amino acids incorporated), which drop off the ribosome during protein synthesis, or as a result of ribosome stalling. Catalyzes the release of premature peptidyl moieties from peptidyl-tRNA molecules trapped in stalled 50S ribosomal subunits, and thus maintains levels of free tRNAs and 50S ribosomes. This is Peptidyl-tRNA hydrolase from Prochlorococcus marinus (strain MIT 9312).